The following is a 118-amino-acid chain: Small ribosomal subunit protein uS12cz/uS12cy (118 aa).

It belongs to the universal ribosomal protein uS12 family. As to quaternary structure, part of the 30S ribosomal subunit.

The protein resides in the plastid. The protein localises to the chloroplast. Functionally, with S4 and S5 plays an important role in translational accuracy. Located at the interface of the 30S and 50S subunits. This chain is Small ribosomal subunit protein uS12cz/uS12cy (rps12-A), found in Helianthus annuus (Common sunflower).